The primary structure comprises 1099 residues: Protein DDB_G0287365 (1099 aa).

The N-terminal stretch at 1–24 (MMSFNLILILIIFLILIQNYVIDG) is a signal peptide. Positions 47–174 (KSWKKLKLPI…TKTTWTKLIS (128 aa)) constitute a G8 domain. N-linked (GlcNAc...) asparagine glycans are attached at residues asparagine 62, asparagine 137, asparagine 664, asparagine 764, and asparagine 858.

The protein belongs to the CEMIP family.

The protein is Protein DDB_G0287365 of Dictyostelium discoideum (Social amoeba).